Consider the following 103-residue polypeptide: CLAVATA3/ESR (CLE)-related protein 16 (103 aa).

The N-terminal stretch at M1–Y21 is a signal peptide. Positions V71–N103 are disordered. A compositionally biased stretch (basic and acidic residues) spans Q76–L93. Residue P98 is modified to Hydroxyproline. An O-linked (Ara...) hydroxyproline glycan is attached at P98.

The protein belongs to the CLV3/ESR signal peptide family. The O-glycosylation (arabinosylation) of the hydroxyproline Pro-98 enhances binding affinity of the CLE16p peptide for its receptor. As to expression, expressed in roots, stems, apex, seedlings, leaves, flowers and siliques.

The protein localises to the secreted. Its subcellular location is the extracellular space. Functionally, extracellular signal peptide that regulates cell fate. Represses root apical meristem maintenance. Regulates the transition of protophloem cells from proliferation to differentiation, thus impinging on postembryonic growth capacity of the root meristem; this signaling pathway requires CRN and CLV2. The sequence is that of CLAVATA3/ESR (CLE)-related protein 16 from Arabidopsis thaliana (Mouse-ear cress).